The sequence spans 134 residues: Endoribonuclease YbeY (134 aa).

Zn(2+) is bound by residues His94, His98, and His104.

Belongs to the endoribonuclease YbeY family. Zn(2+) serves as cofactor.

It localises to the cytoplasm. In terms of biological role, single strand-specific metallo-endoribonuclease involved in late-stage 70S ribosome quality control and in maturation of the 3' terminus of the 16S rRNA. This chain is Endoribonuclease YbeY, found in Campylobacter jejuni subsp. jejuni serotype O:23/36 (strain 81-176).